The sequence spans 284 residues: 2-dehydro-3-deoxyphosphooctonate aldolase (284 aa).

It belongs to the KdsA family.

It is found in the cytoplasm. It carries out the reaction D-arabinose 5-phosphate + phosphoenolpyruvate + H2O = 3-deoxy-alpha-D-manno-2-octulosonate-8-phosphate + phosphate. It participates in carbohydrate biosynthesis; 3-deoxy-D-manno-octulosonate biosynthesis; 3-deoxy-D-manno-octulosonate from D-ribulose 5-phosphate: step 2/3. It functions in the pathway bacterial outer membrane biogenesis; lipopolysaccharide biosynthesis. The protein is 2-dehydro-3-deoxyphosphooctonate aldolase of Synechococcus sp. (strain ATCC 27144 / PCC 6301 / SAUG 1402/1) (Anacystis nidulans).